The chain runs to 105 residues: uncharacterized protein (105 aa).

2 consecutive transmembrane segments (helical) span residues 7–26 (VLSV…WLSL) and 30–52 (VDMT…LISI).

It localises to the cell membrane. This is an uncharacterized protein from Archaeoglobus fulgidus (strain ATCC 49558 / DSM 4304 / JCM 9628 / NBRC 100126 / VC-16).